The chain runs to 248 residues: Probable transcriptional regulatory protein Fphi_1565 (248 aa).

It belongs to the TACO1 family.

It is found in the cytoplasm. The chain is Probable transcriptional regulatory protein Fphi_1565 from Francisella philomiragia subsp. philomiragia (strain ATCC 25017 / CCUG 19701 / FSC 153 / O#319-036).